The sequence spans 1110 residues: RNA2 polyprotein (1110 aa).

A disordered region spans residues 195–215; that stretch reads VHPGGPALPPPPPPPPIQKPP. Over residues 200–213 the composition is skewed to pro residues; sequence PALPPPPPPPPIQK.

Belongs to the nepoviruses RNA2 polyprotein family. In terms of processing, specific enzymatic cleavages in vivo by the P1 encoded 3C-like protease yield mature proteins.

Its subcellular location is the host cell junction. The protein localises to the host plasmodesma. It localises to the virion. Functionally, implicated in RNA2 replication. Could also be required for nematode transmission of the virus. In terms of biological role, transports viral genome to neighboring plant cells directly through plasmosdesmata, without any budding. The movement protein allows efficient cell to cell propagation, by bypassing the host cell wall barrier. Acts by forming a tubular structure at the host plasmodesmata, enlarging it enough to allow free passage of virion capsids. This Arabis mosaic virus (isolate NW) (ArMV) protein is RNA2 polyprotein.